A 100-amino-acid chain; its full sequence is Large ribosomal subunit protein uL23 (100 aa).

This sequence belongs to the universal ribosomal protein uL23 family. In terms of assembly, part of the 50S ribosomal subunit. Contacts protein L29, and trigger factor when it is bound to the ribosome.

Functionally, one of the early assembly proteins it binds 23S rRNA. One of the proteins that surrounds the polypeptide exit tunnel on the outside of the ribosome. Forms the main docking site for trigger factor binding to the ribosome. The polypeptide is Large ribosomal subunit protein uL23 (Synechococcus sp. (strain WH7803)).